The sequence spans 189 residues: dCTP deaminase (189 aa).

DCTP is bound by residues 112-117 (KSTYAR), 136-138 (TLE), Gln157, Tyr171, and Gln181. Glu138 serves as the catalytic Proton donor/acceptor.

This sequence belongs to the dCTP deaminase family. Homotrimer.

The catalysed reaction is dCTP + H2O + H(+) = dUTP + NH4(+). It participates in pyrimidine metabolism; dUMP biosynthesis; dUMP from dCTP (dUTP route): step 1/2. Functionally, catalyzes the deamination of dCTP to dUTP. The protein is dCTP deaminase of Paraburkholderia phymatum (strain DSM 17167 / CIP 108236 / LMG 21445 / STM815) (Burkholderia phymatum).